The chain runs to 654 residues: Acetyl-coenzyme A synthetase (654 aa).

CoA contacts are provided by residues 190–193 and T313; that span reads RGGK. ATP is bound by residues 389–391, 413–418, D504, and R519; these read GEP and DTWWQT. S527 serves as a coordination point for CoA. R530 contributes to the ATP binding site. V541 and V546 together coordinate Mg(2+). K613 is modified (N6-acetyllysine).

It belongs to the ATP-dependent AMP-binding enzyme family. It depends on Mg(2+) as a cofactor. Acetylated. Deacetylation by the SIR2-homolog deacetylase activates the enzyme.

The catalysed reaction is acetate + ATP + CoA = acetyl-CoA + AMP + diphosphate. Its function is as follows. Catalyzes the conversion of acetate into acetyl-CoA (AcCoA), an essential intermediate at the junction of anabolic and catabolic pathways. AcsA undergoes a two-step reaction. In the first half reaction, AcsA combines acetate with ATP to form acetyl-adenylate (AcAMP) intermediate. In the second half reaction, it can then transfer the acetyl group from AcAMP to the sulfhydryl group of CoA, forming the product AcCoA. In Leptospira borgpetersenii serovar Hardjo-bovis (strain JB197), this protein is Acetyl-coenzyme A synthetase.